Here is a 247-residue protein sequence, read N- to C-terminus: Small ribosomal subunit protein uS2 (247 aa).

It belongs to the universal ribosomal protein uS2 family.

In Pseudomonas syringae pv. tomato (strain ATCC BAA-871 / DC3000), this protein is Small ribosomal subunit protein uS2.